Reading from the N-terminus, the 542-residue chain is CTP synthase (542 aa).

Positions 1–265 (MARYIFITGG…DQEVLSAFGI (265 aa)) are amidoligase domain. Ser-13 lines the CTP pocket. Ser-13 contributes to the UTP binding site. An ATP-binding site is contributed by 14-19 (SLGKGL). Tyr-54 contacts L-glutamine. Position 71 (Asp-71) interacts with ATP. Mg(2+)-binding residues include Asp-71 and Glu-139. CTP is bound by residues 146 to 148 (DIE), 186 to 191 (KTKPTQ), and Lys-222. Residues 186-191 (KTKPTQ) and Lys-222 contribute to the UTP site. Residue 238-240 (RDV) participates in ATP binding. Residues 291-541 (TIAIVGKYTG…IAAAMEQSRL (251 aa)) enclose the Glutamine amidotransferase type-1 domain. Position 353 (Gly-353) interacts with L-glutamine. Residue Cys-380 is the Nucleophile; for glutamine hydrolysis of the active site. L-glutamine is bound by residues 381–384 (FGMQ), Glu-404, and Arg-469. Catalysis depends on residues His-514 and Glu-516.

This sequence belongs to the CTP synthase family. In terms of assembly, homotetramer.

It catalyses the reaction UTP + L-glutamine + ATP + H2O = CTP + L-glutamate + ADP + phosphate + 2 H(+). The enzyme catalyses L-glutamine + H2O = L-glutamate + NH4(+). The catalysed reaction is UTP + NH4(+) + ATP = CTP + ADP + phosphate + 2 H(+). It functions in the pathway pyrimidine metabolism; CTP biosynthesis via de novo pathway; CTP from UDP: step 2/2. Its activity is regulated as follows. Allosterically activated by GTP, when glutamine is the substrate; GTP has no effect on the reaction when ammonia is the substrate. The allosteric effector GTP functions by stabilizing the protein conformation that binds the tetrahedral intermediate(s) formed during glutamine hydrolysis. Inhibited by the product CTP, via allosteric rather than competitive inhibition. In terms of biological role, catalyzes the ATP-dependent amination of UTP to CTP with either L-glutamine or ammonia as the source of nitrogen. Regulates intracellular CTP levels through interactions with the four ribonucleotide triphosphates. This chain is CTP synthase, found in Beijerinckia indica subsp. indica (strain ATCC 9039 / DSM 1715 / NCIMB 8712).